The sequence spans 225 residues: Non-structural protein V (225 aa).

Positions 145–157 are enriched in polar residues; the sequence is SNEPVSSAGSAQD. Residues 145 to 173 are disordered; the sequence is SNEPVSSAGSAQDPNFKRGGANRERARGN. Zn(2+)-binding residues include His174, Cys193, Cys197, Cys209, Cys211, Cys214, Cys218, and Cys221.

This sequence belongs to the paramyxoviruses V protein family. As to quaternary structure, interacts with host IFIH1/MDA5 and DHX58/LGP2. Forms with host DDB1, CUL4A, STAT1 and STAT2 the HPIV2 virus V-dependent complex (VDC); this complex targets host STAT2 to proteasomal degradation.

It localises to the host nucleus. Functionally, plays an essential role in the inhibition of host immune response. Prevents the establishment of cellular antiviral state by blocking interferon-alpha/beta (IFN-alpha/beta) production and signaling pathway. Interacts with host IFIH1/MDA5 and DHX58/LGP2 to inhibit the transduction pathway involved in the activation of IFN-beta promoter, thus protecting the virus against cell antiviral state. Efficiently blocks type I IFN signaling following infection by targeting host STAT2 for proteasomal degradation. Also plays a role in viral growth by promoting host RhoA-induced F-actin formation. The sequence is that of Non-structural protein V (P/V) from Homo sapiens (Human).